Consider the following 271-residue polypeptide: 2-aminophenol 1,6-dioxygenase subunit alpha (271 aa).

The protein belongs to the LigB/MhpB extradiol dioxygenase family. As to quaternary structure, the APD complex is a heterotetramer of 2 alpha (CnbCa) and 2 beta (CnbCb) subunits.

The protein operates within xenobiotic degradation; nitrobenzene degradation. It functions in the pathway xenobiotic degradation; 4-chloronitrobenzene degradation. Its function is as follows. Component of the 2-aminophenol 1,6-dioxygenase (APD) complex that catalyzes the ring fission of 2-aminophenol to produce 2-aminomuconic semialdehyde. CnbCa may have a role in the stability of the complex. The complex is also active on other substrates such as 2-amino-5-chlorophenol (68% activity), protocatechuate (33% activity) and catechol (5% activity). Both 2-aminophenol and 2-amino-5-cholorophenol are likely native substrates for this dioxygenase which is involved in the reductive degradation pathway of both nitrobenzene (NB) and 4-chloronitrobenzene (4-CNB), allowing C.testosteroni strain CNB-1 to grow on these compounds as sole source of carbon, nitrogen, and energy. The sequence is that of 2-aminophenol 1,6-dioxygenase subunit alpha from Comamonas testosteroni (Pseudomonas testosteroni).